The chain runs to 871 residues: MAKIRIHEIAKELGYDSKEIIEKANELGLGIKTASNAVEPEIAAAIYEYIQTREIPEAFKKNIKTPTAKKPKKENIKEQEKLNESEKKEPKKEEKLKQEVKKEELKIEKENAKEEEKQEIIDAHKPQSLASATLAKRRGLVIVKKKKDEEEIQVKKEEVKNSNDISINNEERLSLKTMFSNADESLKKKKKEKKSFVASKKESTEKMNFLDEHDFGDISLDDEDEVVLPDFSVKEQEKPQNINKKQPNFIRQAVGNSAGFGLEGGIQRRSRKKPSKKIEKKEVEEVGSVAISKEIRVYEFADKIGKSTSEVISKLFMLGMMTTKNDFLDEDAIEILAAEFGIEINIINEADEFDYVKDYEEETDEKDLVTRAPVITIMGHVDHGKTSLLDYIRKSRVASGEAGGITQHVGAYMVEKNGRKITFIDTPGHEAFTAMRARGASITDIVIIVVAADDGVKPQTKEAINHAKAAGVPIIIAINKMDKEAANPDMVKTQLAEMEIMPVEWGGSYEFVGVSAKTGMGIEDLLEIVLLQADILELKANPKSFAKASIIESSVQKGRGAAATIIVQNGTLTVGSTVVAGEAYGKVRAMSDDQGKALKEIKPGECGVIVGLSEVADAGEILIAVKTDKEAREYANKRHEYNRQKELSKSTKVSIDELGAKIKEGNLKALPVILKADVQGSLEALKASLEKLRNDEIKVNIIHSGVGGITQSDIELASASENSIVLGFNIRPTGEVKERSKDKGVEIKTYNVIYNLLDDVKALLGGMMSPIISEEQLGQAEIRQVINVPKIGQIAGCMVTEGVINRGAKIRLIRDGVVVYEGNVSSLKRFKDDAKEVAKGYECGVGIEGCDDMRVGDYIESYKEVEEQASL.

Disordered stretches follow at residues 60-101 and 184-203; these read KKNI…QEVK and ESLK…KKES. Residues 61-72 show a composition bias toward basic residues; sequence KNIKTPTAKKPK. Over residues 73 to 101 the composition is skewed to basic and acidic residues; it reads KENIKEQEKLNESEKKEPKKEEKLKQEVK. In terms of domain architecture, tr-type G spans 370–537; that stretch reads TRAPVITIMG…IVLLQADILE (168 aa). The G1 stretch occupies residues 379–386; that stretch reads GHVDHGKT. 379 to 386 provides a ligand contact to GTP; it reads GHVDHGKT. The tract at residues 404-408 is G2; sequence GITQH. The segment at 425–428 is G3; that stretch reads DTPG. GTP is bound by residues 425-429 and 479-482; these read DTPGH and NKMD. Residues 479-482 form a G4 region; sequence NKMD. A G5 region spans residues 515–517; sequence SAK.

It belongs to the TRAFAC class translation factor GTPase superfamily. Classic translation factor GTPase family. IF-2 subfamily.

The protein localises to the cytoplasm. Its function is as follows. One of the essential components for the initiation of protein synthesis. Protects formylmethionyl-tRNA from spontaneous hydrolysis and promotes its binding to the 30S ribosomal subunits. Also involved in the hydrolysis of GTP during the formation of the 70S ribosomal complex. The sequence is that of Translation initiation factor IF-2 from Campylobacter jejuni subsp. jejuni serotype O:23/36 (strain 81-176).